The chain runs to 220 residues: Ubiquitin-like-conjugating enzyme ATG10 (220 aa).

The active-site Glycyl thioester intermediate is the C166.

Belongs to the ATG10 family. Interacts with MAP1LC3A. By interacting with MAP1LC3A, it plays a role in the conjugation of ATG12 to ATG5. Also able to directly interact either with ATG5 or ATG7. Interacts with IRGM.

It is found in the cytoplasm. Functionally, E2-like enzyme involved in autophagy. Acts as an E2-like enzyme that catalyzes the conjugation of ATG12 to ATG5. ATG12 conjugation to ATG5 is required for autophagy. Likely serves as an ATG5-recognition molecule. Not involved in ATG12 conjugation to ATG3. Plays a role in adenovirus-mediated cell lysis. This Homo sapiens (Human) protein is Ubiquitin-like-conjugating enzyme ATG10 (ATG10).